Here is a 289-residue protein sequence, read N- to C-terminus: Ribonuclease Z (289 aa).

Residues His-63, His-65, Asp-67, His-68, His-143, Asp-197, and His-255 each coordinate Zn(2+). Asp-67 serves as the catalytic Proton acceptor.

It belongs to the RNase Z family. As to quaternary structure, homodimer. The cofactor is Zn(2+).

The enzyme catalyses Endonucleolytic cleavage of RNA, removing extra 3' nucleotides from tRNA precursor, generating 3' termini of tRNAs. A 3'-hydroxy group is left at the tRNA terminus and a 5'-phosphoryl group is left at the trailer molecule.. Zinc phosphodiesterase, which displays some tRNA 3'-processing endonuclease activity. Probably involved in tRNA maturation, by removing a 3'-trailer from precursor tRNA. The polypeptide is Ribonuclease Z (Azobacteroides pseudotrichonymphae genomovar. CFP2).